Here is a 614-residue protein sequence, read N- to C-terminus: Probable LRR receptor-like serine/threonine-protein kinase At5g63710 (614 aa).

The N-terminal stretch at 1-50 (MAHSGNGESFHDPLRGFIQRNCFRWNNQKLILQCFMALAFVGITSSTTQP) is a signal peptide. The Extracellular portion of the chain corresponds to 51–224 (DIEGGALLQL…VTSSKKKLRD (174 aa)). N-linked (GlcNAc...) asparagine glycosylation is found at asparagine 65, asparagine 125, asparagine 146, and asparagine 175. LRR repeat units follow at residues 115 to 139 (LKFL…LGNM), 141 to 163 (NLQT…WSQL), and 164 to 187 (SNLK…FFSI). The chain crosses the membrane as a helical span at residues 225–245 (ITLTASCVASIILFLGAMVMY). At 246-613 (HHHRVRRTKY…DQESIRLSTA (368 aa)) the chain is on the cytoplasmic side. Residue threonine 286 is modified to Phosphothreonine. Residues 289 to 573 (FNESNLIGQG…GTGGLAEKWT (285 aa)) enclose the Protein kinase domain. Position 295-303 (295-303 (IGQGGFGKV)) interacts with ATP. The residue at position 312 (threonine 312) is a Phosphothreonine. Lysine 317 serves as a coordination point for ATP. Serine 370 is modified (phosphoserine). Threonine 389 bears the Phosphothreonine mark. Aspartate 416 functions as the Proton acceptor in the catalytic mechanism. Threonine 449, threonine 450, and threonine 455 each carry phosphothreonine. A Phosphotyrosine modification is found at tyrosine 463. Threonine 466 carries the post-translational modification Phosphothreonine. Serine 470 bears the Phosphoserine mark. Threonine 545 is modified (phosphothreonine).

The protein belongs to the protein kinase superfamily. Ser/Thr protein kinase family.

It is found in the cell membrane. The enzyme catalyses L-seryl-[protein] + ATP = O-phospho-L-seryl-[protein] + ADP + H(+). It catalyses the reaction L-threonyl-[protein] + ATP = O-phospho-L-threonyl-[protein] + ADP + H(+). This Arabidopsis thaliana (Mouse-ear cress) protein is Probable LRR receptor-like serine/threonine-protein kinase At5g63710.